Here is a 767-residue protein sequence, read N- to C-terminus: Polyribonucleotide nucleotidyltransferase (767 aa).

Positions 509 and 515 each coordinate Mg(2+). The KH domain maps to 575 to 634 (PRILTVKVPIDKIGEVIGPKGKMINSIQDETGAEITIEDDGTIYIGATDGPSAEAARDAI). The region spanning 646 to 718 (GERYLGTVVK…ERGKLSLVPV (73 aa)) is the S1 motif domain. A disordered region spans residues 725 to 767 (AVAAPNGGESPNGAKKTDASGNGAKQPRRRRRTRSSSRSSENT). A compositionally biased stretch (basic residues) spans 750 to 759 (QPRRRRRTRS).

It belongs to the polyribonucleotide nucleotidyltransferase family. Mg(2+) is required as a cofactor.

The protein localises to the cytoplasm. The catalysed reaction is RNA(n+1) + phosphate = RNA(n) + a ribonucleoside 5'-diphosphate. Functionally, involved in mRNA degradation. Catalyzes the phosphorolysis of single-stranded polyribonucleotides processively in the 3'- to 5'-direction. This is Polyribonucleotide nucleotidyltransferase from Thermobifida fusca (strain YX).